Here is a 371-residue protein sequence, read N- to C-terminus: Putative HAD-like hydrolase Noc_2718 (371 aa).

The interval 1–288 is HAD-like hydrolase; that stretch reads MKQKILLCSD…TGREESAEEE (288 aa). The YcgL domain maps to 291–371; it reads QSCAIYRSCK…QLSSREYRRS (81 aa).

This sequence in the N-terminal section; belongs to the HAD-like hydrolase superfamily.

The chain is Putative HAD-like hydrolase Noc_2718 from Nitrosococcus oceani (strain ATCC 19707 / BCRC 17464 / JCM 30415 / NCIMB 11848 / C-107).